The primary structure comprises 450 residues: Zinc metalloproteinase nas-13 (450 aa).

The signal sequence occupies residues 1-31; sequence MPSPTSSSASVFSSHLFFVFCIFSQIAQSYA. A glycan (N-linked (GlcNAc...) asparagine) is linked at Asn68. The Peptidase M12A domain maps to 110–303; the sequence is NAVRQTYLKW…YKINMLYNCP (194 aa). Cystine bridges form between Cys152-Cys302 and Cys174-Cys193. His201 is a Zn(2+) binding site. The active site involves Glu202. Zn(2+) is bound by residues His205 and His211. Asn225 carries an N-linked (GlcNAc...) asparagine glycan. Positions 349–351 match the Cell attachment site motif; that stretch reads RGD. Disulfide bonds link Cys368/Cys404, Cys375/Cys397, Cys384/Cys401, Cys414/Cys450, Cys421/Cys443, and Cys430/Cys447. 2 consecutive ShKT domains span residues 368–404 and 414–450; these read CEDR…CGKC and CEDA…CNFC. N-linked (GlcNAc...) asparagine glycosylation occurs at Asn431.

The cofactor is Zn(2+).

It is found in the secreted. Its function is as follows. Metalloprotease. The polypeptide is Zinc metalloproteinase nas-13 (nas-13) (Caenorhabditis elegans).